A 433-amino-acid chain; its full sequence is Pyrimidine-nucleoside phosphorylase (433 aa).

A phosphate-binding site is contributed by Lys-81–Ser-83. The K(+) site is built by Gly-88 and Thr-90. Phosphate-binding positions include Thr-92, Lys-108–Ser-110, and Thr-120. 2 residues coordinate substrate: Arg-168 and Lys-187. Residues Leu-243, Ala-246, and Glu-255 each contribute to the K(+) site.

The protein belongs to the thymidine/pyrimidine-nucleoside phosphorylase family. In terms of assembly, homodimer. The cofactor is K(+).

It carries out the reaction uridine + phosphate = alpha-D-ribose 1-phosphate + uracil. The catalysed reaction is thymidine + phosphate = 2-deoxy-alpha-D-ribose 1-phosphate + thymine. It catalyses the reaction 2'-deoxyuridine + phosphate = 2-deoxy-alpha-D-ribose 1-phosphate + uracil. Catalyzes phosphorolysis of the pyrimidine nucleosides uridine, thymidine and 2'-deoxyuridine with the formation of the corresponding pyrimidine base and ribose-1-phosphate. The polypeptide is Pyrimidine-nucleoside phosphorylase (pdp) (Staphylococcus aureus (strain NCTC 8325 / PS 47)).